A 154-amino-acid chain; its full sequence is Ribonuclease 8 (154 aa).

The signal sequence occupies residues 1–27 (MAPARAGCCALLLLLLGLWVAEIPVSA). The active-site Proton acceptor is H42. 3 disulfide bridges follow: C64–C118, C82–C133, and C89–C96. Substrate-binding positions include 65-69 (KDLNT) and K90. H149 (proton donor) is an active-site residue.

It belongs to the pancreatic ribonuclease family.

It localises to the secreted. Its function is as follows. Has a low ribonuclease activity. The chain is Ribonuclease 8 (RNASE8) from Pongo pygmaeus (Bornean orangutan).